A 727-amino-acid chain; its full sequence is 1,4-alpha-glucan branching enzyme GlgB (727 aa).

Asp405 acts as the Nucleophile in catalysis. Glu458 acts as the Proton donor in catalysis.

This sequence belongs to the glycosyl hydrolase 13 family. GlgB subfamily. Monomer.

It catalyses the reaction Transfers a segment of a (1-&gt;4)-alpha-D-glucan chain to a primary hydroxy group in a similar glucan chain.. Its pathway is glycan biosynthesis; glycogen biosynthesis. Functionally, catalyzes the formation of the alpha-1,6-glucosidic linkages in glycogen by scission of a 1,4-alpha-linked oligosaccharide from growing alpha-1,4-glucan chains and the subsequent attachment of the oligosaccharide to the alpha-1,6 position. This Yersinia enterocolitica serotype O:8 / biotype 1B (strain NCTC 13174 / 8081) protein is 1,4-alpha-glucan branching enzyme GlgB.